Reading from the N-terminus, the 106-residue chain is Acylphosphatase-2 (106 aa).

Residues 16–106 enclose the Acylphosphatase-like domain; the sequence is SVDYEVFGTV…LEYSDFSIRY (91 aa). Active-site residues include arginine 31 and asparagine 49. A Phosphoserine modification is found at serine 100.

Belongs to the acylphosphatase family.

The catalysed reaction is an acyl phosphate + H2O = a carboxylate + phosphate + H(+). This chain is Acylphosphatase-2 (Acyp2), found in Mus musculus (Mouse).